Here is a 494-residue protein sequence, read N- to C-terminus: MNYMTITAHKLKDMIKNREISVEEIARTYLDRVDEVDGKLGAYLYVASEGLLQKAKELDKKISRGEILGKLFGIPISVKDNISVENMQNTCASRMLTGYISPYDAHVVEKIKFHQGIIIGKTNMDEFAMGSSTENSSIKLSRNPWDLNRVPGGSSGGSAISVAAGEAALSIGTDTGGSIRQPASFCGVVGLKPTYGRISRYGAVAFGSTLDQIGTIAADVEDCALLTECISGMDKRDFTTADMEVPKYSKSLSKDIKGMRIGIPKEYFGEGLNDKVRKSVEEAILVLKENGAQIKECSIPLSEYALAAYYIIASAEASSNLARFDGIRYGYRSKNFKDAVDIYFKSRSEGLGSEVKRRIVLGTYVLSEGYYDDYYKKALKVRKLIRNQFEDIMKEFHAIISPTCPTTAFKIDEKKEDVMAMYLSDIYTVPANITGIPAISIPCGMVDGLPVGLQIMSGYFRENILFNVAYSFEQSTKWHSITPDIQKEDRNYGI.

Catalysis depends on charge relay system residues lysine 79 and serine 154. Serine 178 serves as the catalytic Acyl-ester intermediate.

The protein belongs to the amidase family. GatA subfamily. In terms of assembly, heterotrimer of A, B and C subunits.

The enzyme catalyses L-glutamyl-tRNA(Gln) + L-glutamine + ATP + H2O = L-glutaminyl-tRNA(Gln) + L-glutamate + ADP + phosphate + H(+). Its function is as follows. Allows the formation of correctly charged Gln-tRNA(Gln) through the transamidation of misacylated Glu-tRNA(Gln) in organisms which lack glutaminyl-tRNA synthetase. The reaction takes place in the presence of glutamine and ATP through an activated gamma-phospho-Glu-tRNA(Gln). This is Glutamyl-tRNA(Gln) amidotransferase subunit A from Clostridium kluyveri (strain NBRC 12016).